Reading from the N-terminus, the 363-residue chain is MEDGTLFAGAGFGAPAVQAGEVVFNTGMTGYQEVVTDPSYYGQIVVMTYPLIGNYGVTAADGESRQPWIRGLVVKELCDRPSHWQAVGSLSDYLAGCGVPILAGLDTRALTRHLRSHGTMRGVIATLPEGAEPGPAQVAAWVETARAFRLEGAVRSVATAAPYRIPGPGPRVVAVDFGAKENILRELTARGCDVTVVPATASAEEVLSLRPEGVVLTNGPGAPTDVPEAVEMVRGLLSQGDLPIFGICLGHQIAALALGATTYKLPYGHRGANHPVKELATGRIHITSQNHGYAVAAESLPPEVEVTHVSLHDGTVEGLAHRRLPLFTVQYHPEACPGPRENRYLFDRFLALVDRSAVSTRTA.

The CPSase stretch occupies residues 1–171 (MEDGTLFAGA…PYRIPGPGPR (171 aa)). L-glutamine-binding residues include S39, G219, and G221. The 189-residue stretch at 171 to 359 (RVVAVDFGAK…LALVDRSAVS (189 aa)) folds into the Glutamine amidotransferase type-1 domain. The Nucleophile role is filled by C248. Residues L249, Q252, N290, G292, and Y293 each contribute to the L-glutamine site. Catalysis depends on residues H332 and E334.

It belongs to the CarA family. Composed of two chains; the small (or glutamine) chain promotes the hydrolysis of glutamine to ammonia, which is used by the large (or ammonia) chain to synthesize carbamoyl phosphate. Tetramer of heterodimers (alpha,beta)4.

The enzyme catalyses hydrogencarbonate + L-glutamine + 2 ATP + H2O = carbamoyl phosphate + L-glutamate + 2 ADP + phosphate + 2 H(+). The catalysed reaction is L-glutamine + H2O = L-glutamate + NH4(+). The protein operates within amino-acid biosynthesis; L-arginine biosynthesis; carbamoyl phosphate from bicarbonate: step 1/1. It participates in pyrimidine metabolism; UMP biosynthesis via de novo pathway; (S)-dihydroorotate from bicarbonate: step 1/3. Its function is as follows. Small subunit of the glutamine-dependent carbamoyl phosphate synthetase (CPSase). CPSase catalyzes the formation of carbamoyl phosphate from the ammonia moiety of glutamine, carbonate, and phosphate donated by ATP, constituting the first step of 2 biosynthetic pathways, one leading to arginine and/or urea and the other to pyrimidine nucleotides. The small subunit (glutamine amidotransferase) binds and cleaves glutamine to supply the large subunit with the substrate ammonia. This chain is Carbamoyl phosphate synthase small chain, found in Symbiobacterium thermophilum (strain DSM 24528 / JCM 14929 / IAM 14863 / T).